The chain runs to 324 residues: Holliday junction branch migration complex subunit RuvB (324 aa).

Residues 1–180 (MKSISCGKEY…FGIPLHLEFY (180 aa)) form a large ATPase domain (RuvB-L) region. ATP contacts are provided by residues Ile-19, Arg-20, Gly-61, Lys-64, Thr-65, Thr-66, 127–129 (EDF), Arg-170, Tyr-180, and Arg-217. Thr-65 lines the Mg(2+) pocket. Residues 181–251 (SFEELVNIIK…VADSVLLKLG (71 aa)) form a small ATPAse domain (RuvB-S) region. The interval 254–324 (KMGLNKLDMN…TDQAKEYLSL (71 aa)) is head domain (RuvB-H). Residues Arg-307 and Arg-312 each coordinate DNA.

It belongs to the RuvB family. Homohexamer. Forms an RuvA(8)-RuvB(12)-Holliday junction (HJ) complex. HJ DNA is sandwiched between 2 RuvA tetramers; dsDNA enters through RuvA and exits via RuvB. An RuvB hexamer assembles on each DNA strand where it exits the tetramer. Each RuvB hexamer is contacted by two RuvA subunits (via domain III) on 2 adjacent RuvB subunits; this complex drives branch migration. In the full resolvosome a probable DNA-RuvA(4)-RuvB(12)-RuvC(2) complex forms which resolves the HJ.

The protein localises to the cytoplasm. The catalysed reaction is ATP + H2O = ADP + phosphate + H(+). Its function is as follows. The RuvA-RuvB-RuvC complex processes Holliday junction (HJ) DNA during genetic recombination and DNA repair, while the RuvA-RuvB complex plays an important role in the rescue of blocked DNA replication forks via replication fork reversal (RFR). RuvA specifically binds to HJ cruciform DNA, conferring on it an open structure. The RuvB hexamer acts as an ATP-dependent pump, pulling dsDNA into and through the RuvAB complex. RuvB forms 2 homohexamers on either side of HJ DNA bound by 1 or 2 RuvA tetramers; 4 subunits per hexamer contact DNA at a time. Coordinated motions by a converter formed by DNA-disengaged RuvB subunits stimulates ATP hydrolysis and nucleotide exchange. Immobilization of the converter enables RuvB to convert the ATP-contained energy into a lever motion, pulling 2 nucleotides of DNA out of the RuvA tetramer per ATP hydrolyzed, thus driving DNA branch migration. The RuvB motors rotate together with the DNA substrate, which together with the progressing nucleotide cycle form the mechanistic basis for DNA recombination by continuous HJ branch migration. Branch migration allows RuvC to scan DNA until it finds its consensus sequence, where it cleaves and resolves cruciform DNA. The chain is Holliday junction branch migration complex subunit RuvB from Wolbachia sp. subsp. Drosophila simulans (strain wRi).